The chain runs to 252 residues: Flagellar L-ring protein (252 aa).

The first 25 residues, 1–25 (MLKLASLNRIVLTGTLLAAAGLASG), serve as a signal peptide directing secretion. Cysteine 26 is lipidated: N-palmitoyl cysteine. A lipid anchor (S-diacylglycerol cysteine) is attached at cysteine 26.

Belongs to the FlgH family. As to quaternary structure, the basal body constitutes a major portion of the flagellar organelle and consists of four rings (L,P,S, and M) mounted on a central rod.

The protein localises to the cell outer membrane. Its subcellular location is the bacterial flagellum basal body. In terms of biological role, assembles around the rod to form the L-ring and probably protects the motor/basal body from shearing forces during rotation. This is Flagellar L-ring protein from Nitrobacter winogradskyi (strain ATCC 25391 / DSM 10237 / CIP 104748 / NCIMB 11846 / Nb-255).